The sequence spans 556 residues: Polyphenol oxidase 2 (556 aa).

Residues H57, H81, H90, H250, H254, and H282 each coordinate Cu cation. A cross-link (2'-(S-cysteinyl)-histidine (Cys-His)) is located at residues 79 to 81; sequence CTH. H254 contributes to the substrate binding site. The propeptide at 379-556 is removed in mature form; that stretch reads SKPSSGARNT…FDDVAVHVIN (178 aa).

The protein belongs to the tyrosinase family. As to quaternary structure, heterotetramer. Cu(2+) is required as a cofactor. In terms of processing, the C-ter is probably cleaved after Gly-378 since the mature active protein is smaller than the protein encoded by the gene.

It catalyses the reaction 2 L-dopa + O2 = 2 L-dopaquinone + 2 H2O. The catalysed reaction is L-tyrosine + O2 = L-dopaquinone + H2O. In terms of biological role, copper-containing oxidase that catalyzes both the o-hydroxylation of monophenols and the subsequent oxidation of the resulting o-diphenols into reactive o-quinones, which evolve spontaneously to produce intermediates, which associate in dark brown pigments. Involved in the initial step of melanin synthesis. Melanins constitute a mechanism of defense and resistance to stress such as UV radiations, free radicals, gamma rays, dehydratation and extreme temperatures, and contribute to the fungal cell-wall resistance against hydrolytic enzymes in avoiding cellular lysis. Fungal pigments are also involved in the formation and stability of spores. The chain is Polyphenol oxidase 2 (PPO2) from Agaricus bisporus (White button mushroom).